Reading from the N-terminus, the 223-residue chain is MNKGEKLSLFKDYNLYCLTCEDYSLGRRNIDVVREILNAGVRIIQYREKKKTMREKYQEAKKIRELTAQYNALLIINDHLDLAKIVEADGVHIGQEDYPIEVAKEYLGDEFIIGLTTHTKTQVIEAFQKGADYIGLGPIFPSYTKEKPHPPIGLEIIEWAVNHVHIPIVAIGGIKESNIYEVLKHGAKCIAMVTEIVSSQDIYEKTKNIIRILEGYKNGKNLA.

4-amino-2-methyl-5-(diphosphooxymethyl)pyrimidine-binding positions include 45 to 49 (QYREK) and Asn-77. Mg(2+) is bound by residues Asp-78 and Asp-97. Residue Thr-116 participates in 4-amino-2-methyl-5-(diphosphooxymethyl)pyrimidine binding. 142–144 (SYT) serves as a coordination point for 2-[(2R,5Z)-2-carboxy-4-methylthiazol-5(2H)-ylidene]ethyl phosphate. Lys-145 is a 4-amino-2-methyl-5-(diphosphooxymethyl)pyrimidine binding site. 2-[(2R,5Z)-2-carboxy-4-methylthiazol-5(2H)-ylidene]ethyl phosphate is bound by residues Gly-173 and 193 to 194 (VT).

This sequence belongs to the thiamine-phosphate synthase family. Requires Mg(2+) as cofactor.

The catalysed reaction is 2-[(2R,5Z)-2-carboxy-4-methylthiazol-5(2H)-ylidene]ethyl phosphate + 4-amino-2-methyl-5-(diphosphooxymethyl)pyrimidine + 2 H(+) = thiamine phosphate + CO2 + diphosphate. The enzyme catalyses 2-(2-carboxy-4-methylthiazol-5-yl)ethyl phosphate + 4-amino-2-methyl-5-(diphosphooxymethyl)pyrimidine + 2 H(+) = thiamine phosphate + CO2 + diphosphate. It catalyses the reaction 4-methyl-5-(2-phosphooxyethyl)-thiazole + 4-amino-2-methyl-5-(diphosphooxymethyl)pyrimidine + H(+) = thiamine phosphate + diphosphate. Its pathway is cofactor biosynthesis; thiamine diphosphate biosynthesis; thiamine phosphate from 4-amino-2-methyl-5-diphosphomethylpyrimidine and 4-methyl-5-(2-phosphoethyl)-thiazole: step 1/1. Its function is as follows. Condenses 4-methyl-5-(beta-hydroxyethyl)thiazole monophosphate (THZ-P) and 2-methyl-4-amino-5-hydroxymethyl pyrimidine pyrophosphate (HMP-PP) to form thiamine monophosphate (TMP). This Dictyoglomus thermophilum (strain ATCC 35947 / DSM 3960 / H-6-12) protein is Thiamine-phosphate synthase.